Reading from the N-terminus, the 872-residue chain is Leucine-rich repeat-containing protein 66 (872 aa).

A helical transmembrane segment spans residues phenylalanine 4–proline 24. 2 N-linked (GlcNAc...) asparagine glycosylation sites follow: asparagine 45 and asparagine 108. LRR repeat units follow at residues arginine 142–lysine 164, serine 165–glycine 186, glutamine 189–glycine 210, lysine 213–alanine 234, and histidine 239–glutamine 259. The interval leucine 339 to aspartate 363 is disordered. The span at glutamate 349–aspartate 363 shows a compositional bias: basic and acidic residues. A helical membrane pass occupies residues leucine 371–alanine 391. Residues glutamine 467 to glutamate 483 are compositionally biased toward polar residues. Disordered stretches follow at residues glutamine 467–serine 501, glycine 560–arginine 579, asparagine 695–isoleucine 761, and leucine 776–tryptophan 872. Residue asparagine 472 is glycosylated (N-linked (GlcNAc...) asparagine). Over residues glutamine 484 to serine 493 the composition is skewed to basic and acidic residues. Serine 718 carries the post-translational modification Phosphoserine. Composition is skewed to polar residues over residues serine 725–proline 736, serine 746–arginine 760, and cysteine 785–proline 805. The residue at position 752 (serine 752) is a Phosphoserine. The span at valine 831 to glutamate 841 shows a compositional bias: basic and acidic residues.

The protein localises to the membrane. This Mus musculus (Mouse) protein is Leucine-rich repeat-containing protein 66 (Lrrc66).